We begin with the raw amino-acid sequence, 46 residues long: Escargot/snail protein homolog (46 aa).

3 consecutive C2H2-type zinc fingers follow at residues 1 to 4 (HIAH), 9 to 30 (CKCP…IRTH), and 36 to 46 (SVCQHCNRAFA).

Belongs to the snail C2H2-type zinc-finger protein family.

The protein resides in the nucleus. This is Escargot/snail protein homolog from Lithobius forficatus (Centipede).